A 156-amino-acid polypeptide reads, in one-letter code: DNA gyrase inhibitor (156 aa).

It belongs to the DNA gyrase inhibitor family. Interacts with DNA gyrase.

It is found in the cytoplasm. Inhibits the supercoiling activity of DNA gyrase. Acts by inhibiting DNA gyrase at an early step, prior to (or at the step of) binding of DNA by the gyrase. It protects cells against toxins that target DNA gyrase, by inhibiting activity of these toxins and reducing the formation of lethal double-strand breaks in the cell. This is DNA gyrase inhibitor from Serratia proteamaculans (strain 568).